A 217-amino-acid polypeptide reads, in one-letter code: Twisted gastrulation protein homolog 1-A (217 aa).

The first 26 residues, 1–26 (MRPALFLCPVLISVLFLLSSLSLISG), serve as a signal peptide directing secretion. N-linked (GlcNAc...) asparagine glycans are attached at residues N53 and N147.

Belongs to the twisted gastrulation protein family.

Its subcellular location is the secreted. In terms of biological role, involved in dorsal-ventral patterning. Appears to function predominantly as a ventralizing factor, through its actions as a BMP signaling agonist, acting through both chd-dependent and chd-independent mechanisms. May also antagonize BMP signaling, probably via formation of ternary complexes with chd and BMPs, resulting in dorsalization. This is Twisted gastrulation protein homolog 1-A (twsg1a) from Danio rerio (Zebrafish).